The chain runs to 405 residues: Chalcone synthase (405 aa).

Cys170 is a catalytic residue.

Belongs to the thiolase-like superfamily. Chalcone/stilbene synthases family.

The catalysed reaction is (E)-4-coumaroyl-CoA + 3 malonyl-CoA + 3 H(+) = 2',4,4',6'-tetrahydroxychalcone + 3 CO2 + 4 CoA. The protein operates within secondary metabolite biosynthesis; flavonoid biosynthesis. The primary product of this enzyme is 4,2',4',6'-tetrahydroxychalcone (also termed naringenin-chalcone or chalcone) which can under specific conditions spontaneously isomerize into naringenin. This is Chalcone synthase (CHS) from Equisetum arvense (Field horsetail).